We begin with the raw amino-acid sequence, 135 residues long: Probable transcription factor At2g20613 (135 aa).

Residues 1–104 form a disordered region; the sequence is MSHKRFNPLT…KRGGGGGEEA (104 aa). A compositionally biased stretch (acidic residues) spans 28–41; that stretch reads DSSSDEETDSDSDS. Residues 62-80 show a composition bias toward basic and acidic residues; it reads KSVKISEKSVAKRSRETHE.

It belongs to the GeBP family.

The protein is Probable transcription factor At2g20613 of Arabidopsis thaliana (Mouse-ear cress).